The primary structure comprises 312 residues: Glyoxylate/hydroxypyruvate reductase A (312 aa).

Arginine 227 is an active-site residue. Histidine 275 serves as the catalytic Proton donor.

The protein belongs to the D-isomer specific 2-hydroxyacid dehydrogenase family. GhrA subfamily.

It is found in the cytoplasm. It catalyses the reaction glycolate + NADP(+) = glyoxylate + NADPH + H(+). The catalysed reaction is (R)-glycerate + NAD(+) = 3-hydroxypyruvate + NADH + H(+). It carries out the reaction (R)-glycerate + NADP(+) = 3-hydroxypyruvate + NADPH + H(+). Catalyzes the NADPH-dependent reduction of glyoxylate and hydroxypyruvate into glycolate and glycerate, respectively. The polypeptide is Glyoxylate/hydroxypyruvate reductase A (Escherichia coli (strain SMS-3-5 / SECEC)).